We begin with the raw amino-acid sequence, 434 residues long: ATP-dependent protease ATPase subunit HslU (434 aa).

ATP contacts are provided by residues V18, 60–65, D247, E312, and R384; that span reads GVGKTE.

It belongs to the ClpX chaperone family. HslU subfamily. In terms of assembly, a double ring-shaped homohexamer of HslV is capped on each side by a ring-shaped HslU homohexamer. The assembly of the HslU/HslV complex is dependent on binding of ATP.

The protein localises to the cytoplasm. Its function is as follows. ATPase subunit of a proteasome-like degradation complex; this subunit has chaperone activity. The binding of ATP and its subsequent hydrolysis by HslU are essential for unfolding of protein substrates subsequently hydrolyzed by HslV. HslU recognizes the N-terminal part of its protein substrates and unfolds these before they are guided to HslV for hydrolysis. This is ATP-dependent protease ATPase subunit HslU from Bradyrhizobium sp. (strain ORS 278).